We begin with the raw amino-acid sequence, 477 residues long: Metallopeptidase AprA (477 aa).

The N-terminal stretch at 1–20 (MSKAKDKAIVSAAQASTAYS) is a signal peptide. H183 contacts Zn(2+). Residue E184 is part of the active site. Positions 187 and 193 each coordinate Zn(2+). 36 residues coordinate Ca(2+): R264, G266, T268, D296, G298, G299, D301, T338, E340, G345, G347, D349, N354, A356, N358, G362, G363, A364, G365, D367, G371, A372, G373, G374, D376, G380, G381, A382, G383, D385, D394, D401, D411, D453, S455, and D461. Hemolysin-type calcium-binding repeat units lie at residues 343-360 (FGGA…ANVI), 361-378 (KGGA…ADQL), and 379-391 (WGGA…VFGA).

It belongs to the peptidase M10B family. Requires Ca(2+) as cofactor. It depends on Zn(2+) as a cofactor.

It is found in the secreted. Its activity is regulated as follows. Is completely inhibited by the metal cation chelators 1,10-phenanthroline and EDTA, but PMSF, pepstatin A and E-64 have no effect on activity. Peptidase able to cleave azocasein and the milk substrates beta-casein and Na-caseinate. Can withstand UHT processing of milk, and is able to spoil UHT milk over the storage period. This chain is Metallopeptidase AprA, found in Pseudomonas marginalis (Pseudomonas panacis).